A 149-amino-acid polypeptide reads, in one-letter code: Large ribosomal subunit protein eL24A (149 aa).

2 stretches are compositionally biased toward basic and acidic residues: residues 93–102 and 116–125; these read KRNQRPEVRA and KAASESEKKA. Positions 93 to 149 are disordered; it reads KRNQRPEVRAAARAAALKQRKDKKAASESEKKAIKAKSAASSARGQAIKNAKAAARH.

It belongs to the eukaryotic ribosomal protein eL24 family. As to quaternary structure, component of the large ribosomal subunit (LSU). Mature yeast ribosomes consist of a small (40S) and a large (60S) subunit. The 40S small subunit contains 1 molecule of ribosomal RNA (18S rRNA) and at least 33 different proteins. The large 60S subunit contains 3 rRNA molecules (25S, 5.8S and 5S rRNA) and at least 46 different proteins.

It is found in the cytoplasm. Component of the ribosome, a large ribonucleoprotein complex responsible for the synthesis of proteins in the cell. The small ribosomal subunit (SSU) binds messenger RNAs (mRNAs) and translates the encoded message by selecting cognate aminoacyl-transfer RNA (tRNA) molecules. The large subunit (LSU) contains the ribosomal catalytic site termed the peptidyl transferase center (PTC), which catalyzes the formation of peptide bonds, thereby polymerizing the amino acids delivered by tRNAs into a polypeptide chain. The nascent polypeptides leave the ribosome through a tunnel in the LSU and interact with protein factors that function in enzymatic processing, targeting, and the membrane insertion of nascent chains at the exit of the ribosomal tunnel. This Schizosaccharomyces pombe (strain 972 / ATCC 24843) (Fission yeast) protein is Large ribosomal subunit protein eL24A (rpl2401).